The chain runs to 358 residues: Phospho-N-acetylmuramoyl-pentapeptide-transferase (358 aa).

Helical transmembrane passes span 13–35 (LLILNTFALIATSYLFNNFIFIG), 81–101 (MGGVFMVIPFLIFLLIININL), 106–126 (LFLLLLTIFGFFITGFVDDFL), 142–162 (FFLQSIIAIIFIFLAYEKDLI), 171–191 (SWQINMNIFTLPISFLVLVGI), 201–221 (LDGLAAGCSGIVFYGLGTEIL), 228–248 (LIIFSILCYSMSGICLGFLKY), 268–290 (ILGSIALLTNSVFTLSIFSGIFI), and 336–356 (IVENFWKINILLVILGIVLKI).

It belongs to the glycosyltransferase 4 family. MraY subfamily. The cofactor is Mg(2+).

It is found in the cell inner membrane. The catalysed reaction is UDP-N-acetyl-alpha-D-muramoyl-L-alanyl-gamma-D-glutamyl-meso-2,6-diaminopimeloyl-D-alanyl-D-alanine + di-trans,octa-cis-undecaprenyl phosphate = di-trans,octa-cis-undecaprenyl diphospho-N-acetyl-alpha-D-muramoyl-L-alanyl-D-glutamyl-meso-2,6-diaminopimeloyl-D-alanyl-D-alanine + UMP. The protein operates within cell wall biogenesis; peptidoglycan biosynthesis. Its function is as follows. Catalyzes the initial step of the lipid cycle reactions in the biosynthesis of the cell wall peptidoglycan: transfers peptidoglycan precursor phospho-MurNAc-pentapeptide from UDP-MurNAc-pentapeptide onto the lipid carrier undecaprenyl phosphate, yielding undecaprenyl-pyrophosphoryl-MurNAc-pentapeptide, known as lipid I. The sequence is that of Phospho-N-acetylmuramoyl-pentapeptide-transferase from Prochlorococcus marinus (strain MIT 9312).